A 383-amino-acid polypeptide reads, in one-letter code: MDPNPFIYCTCCDCCKLGQPKLIKTPYPLPKHPTGKFKPVLPPPISKEHNSLLSQPGKSTVSPRDKVQSGNTESSKAPSEVIQVSPGYTLIRNREQISVTLGDEMFNRKKHLESDVLSKVKFSRTDIISDLQEQIAELMAIIEQMNRDQQSALKLLSKDLDLRCSNMKQKFETESRELKETHREELERLENNYKEALKAEKALAEEKLDKMSKEYKYLKSMFHVFQDSIYEEMEDKWLRRKAEWEKDEKMEREKILLQQKCRIIKKFELQSEEKKKKMNESISAVSDNFAREKEELLRQHDEDILQIQELRKSKEILEAELRAQATVLETLNTNLFQCQKELERQKTIAANLEKLFQTKLAEAEEKHKYNIKTPTEENNCLRC.

The tract at residues 26–79 (PYPLPKHPTGKFKPVLPPPISKEHNSLLSQPGKSTVSPRDKVQSGNTESSKAPS) is disordered. The span at 51–77 (SLLSQPGKSTVSPRDKVQSGNTESSKA) shows a compositional bias: polar residues. Coiled coils occupy residues 125 to 220 (TDII…YLKS) and 276 to 359 (KKMN…FQTK). Lys354 is modified (N6-acetyllysine).

Isoform 1 is specific to germ cells of the testis and localizes to the principal piece of the sperm flagellum. Isoform 2 seems to be expressed mainly in somatic cells of the testis, and is not detected in mature spermatozoa (at protein level). Isoform 2 may also be expressed weakly in brain.

The protein resides in the cytoplasm. It is found in the cytoplasmic granule. It localises to the cell projection. The protein localises to the cilium. Its subcellular location is the flagellum. This Mus musculus (Mouse) protein is Flagellum-associated coiled-coil domain-containing protein 1.